The chain runs to 63 residues: Large ribosomal subunit protein uL30 (63 aa).

It belongs to the universal ribosomal protein uL30 family. As to quaternary structure, part of the 50S ribosomal subunit.

The polypeptide is Large ribosomal subunit protein uL30 (Rickettsia massiliae (strain Mtu5)).